The sequence spans 105 residues: Insulin-like peptide 7 (105 aa).

A signal peptide spans 1 to 18 (MPPIILVFFLVLIPASQQ). Residues 19–57 (YPFSLESLNDQIINEEVIEYMLENSIRSSRTRRVPDEKK) constitute a propeptide that is removed on maturation. Disulfide bonds link cysteine 61-cysteine 90, cysteine 73-cysteine 103, cysteine 77-cysteine 104, and cysteine 89-cysteine 94.

This sequence belongs to the insulin family.

It is found in the secreted. Its function is as follows. Insulin-like peptide which plays a role in ageing as a consequence of daf-16 activity. In Caenorhabditis elegans, this protein is Insulin-like peptide 7.